Consider the following 140-residue polypeptide: Type II secretion system core protein G (140 aa).

Residues 1 to 6 (MQRQRG) constitute a propeptide, leader sequence. Position 7 is an N-methylphenylalanine (F7). The chain crosses the membrane as a helical span at residues 7 to 27 (FTLLEIMVVIVILGVLASLVV). The interval 120–140 (LGPDGVPESNDDIGNWTIGKK) is disordered.

Belongs to the GSP G family. Type II secretion system is composed of four main components: the outer membrane complex, the inner membrane complex, the cytoplasmic secretion ATPase and the periplasm-spanning pseudopilus. Forms homomultimers. Cleaved by the prepilin peptidase. In terms of processing, methylated by prepilin peptidase at the amino group of the N-terminal phenylalanine once the leader sequence is cleaved.

It is found in the cell inner membrane. In terms of biological role, core component of the type II secretion system required for the energy-dependent secretion of extracellular factors such as proteases and toxins from the periplasm. Pseudopilin (pilin-like) protein that polymerizes to form the pseudopilus. Further polymerization triggers pseudopilus growth. The sequence is that of Type II secretion system core protein G (pulG) from Klebsiella pneumoniae.